The primary structure comprises 65 residues: Large ribosomal subunit protein bL35 (65 aa).

This sequence belongs to the bacterial ribosomal protein bL35 family.

This chain is Large ribosomal subunit protein bL35, found in Enterobacter sp. (strain 638).